Reading from the N-terminus, the 214-residue chain is Ribosomal RNA small subunit methyltransferase G (214 aa).

S-adenosyl-L-methionine-binding positions include Gly-56, Phe-61, 107–108 (IE), and Arg-125.

The protein belongs to the methyltransferase superfamily. RNA methyltransferase RsmG family.

The protein resides in the cytoplasm. Its function is as follows. Specifically methylates the N7 position of a guanine in 16S rRNA. In Syntrophomonas wolfei subsp. wolfei (strain DSM 2245B / Goettingen), this protein is Ribosomal RNA small subunit methyltransferase G.